The primary structure comprises 686 residues: Soluble guanylate cyclase gcy-34 (686 aa).

Position 105 (His-105) interacts with heme. 2 coiled-coil regions span residues 306–335 and 398–432; these read KKHM…ELTQ and VEVN…LKDM. The 129-residue stretch at 455 to 583 folds into the Guanylate cyclase domain; the sequence is TVMFCDLPAF…ETVTLASQME (129 aa). Mg(2+) contacts are provided by Asp-460 and Asp-504.

It belongs to the adenylyl cyclase class-4/guanylyl cyclase family. Heterodimer; with other soluble guanylate cyclases. It depends on heme as a cofactor. As to expression, expressed in a small number of neurons, corresponding to URX, AQR and PQR neurons.

It localises to the cytoplasm. It carries out the reaction GTP = 3',5'-cyclic GMP + diphosphate. May be regulated by molecular oxygen. Probably not activated by nitric oxide (NO). Its function is as follows. Synthesizes cyclic GMP (cGMP) from GTP. May be involved in sensitivity to quinine by regulating egl-4 activity through the production of cGMP. This Caenorhabditis elegans protein is Soluble guanylate cyclase gcy-34 (gcy-34).